Consider the following 171-residue polypeptide: FVTVLGSITDILVTEFGNNFINLSFLRLFRAARLIKLLRQGYTIRILLWTFVQSFKALPYVCLLIAMLFFIYAIIGMQVFGNIGIEEEDDESAITQHNNFRTFFQALMLLFRSATGEAWHEIMLSCLSGKPCDENSGIKEDECGNEFAYFYFVSFIFLCSFLMLNLFVAVI.

A helical transmembrane segment spans residues 1–11; that stretch reads FVTVLGSITDI. An IV repeat occupies 1–171; the sequence is FVTVLGSITD…LMLNLFVAVI (171 aa). Residues 12-18 lie on the Extracellular side of the membrane; that stretch reads LVTEFGN. Residues 19-37 traverse the membrane as a helical segment; it reads NFINLSFLRLFRAARLIKL. Residues 38–56 are Cytoplasmic-facing; the sequence is LRQGYTIRILLWTFVQSFK. A helical transmembrane segment spans residues 57-76; it reads ALPYVCLLIAMLFFIYAIIG. At 77 to 143 the chain is on the extracellular side; sequence MQVFGNIGIE…ENSGIKEDEC (67 aa). The helical transmembrane segment at 144-168 threads the bilayer; that stretch reads GNEFAYFYFVSFIFLCSFLMLNLFV. The Cytoplasmic portion of the chain corresponds to 169–171; it reads AVI.

Belongs to the calcium channel alpha-1 subunit (TC 1.A.1.11) family. CACNA1A subfamily. Voltage-dependent calcium channels are multisubunit complexes, consisting of alpha-1, alpha-2, beta and delta subunits in a 1:1:1:1 ratio. The channel activity is directed by the pore-forming and voltage-sensitive alpha-1 subunit. In many cases, this subunit is sufficient to generate voltage-sensitive calcium channel activity. The auxiliary subunits beta and alpha-2/delta linked by a disulfide bridge regulate the channel activity.

The protein localises to the cell membrane. The catalysed reaction is Ca(2+)(in) = Ca(2+)(out). The isoform alpha-1A gives rise to P and/or Q-type calcium currents. P/Q-type calcium channels belong to the 'high-voltage activated' (HVA) group. The sequence is that of Voltage-dependent P/Q-type calcium channel subunit alpha-1A (CACNA1A) from Gallus gallus (Chicken).